Consider the following 193-residue polypeptide: DNA damage-inducible transcript 4-like protein (193 aa).

The protein belongs to the DDIT4 family.

Its subcellular location is the cytoplasm. Functionally, inhibits cell growth by regulating the TOR signaling pathway upstream of the TSC1-TSC2 complex and downstream of AKT1. The polypeptide is DNA damage-inducible transcript 4-like protein (Ddit4l) (Mus musculus (Mouse)).